A 249-amino-acid polypeptide reads, in one-letter code: Coproheme decarboxylase (249 aa).

Fe-coproporphyrin III-binding positions include R131, 145–149, H172, Q185, and S223; that span reads YPMNK. The active site involves Y145.

It belongs to the ChdC family. Type 1 subfamily. The cofactor is Fe-coproporphyrin III.

It carries out the reaction Fe-coproporphyrin III + 2 H2O2 + 2 H(+) = heme b + 2 CO2 + 4 H2O. The catalysed reaction is Fe-coproporphyrin III + H2O2 + H(+) = harderoheme III + CO2 + 2 H2O. The enzyme catalyses harderoheme III + H2O2 + H(+) = heme b + CO2 + 2 H2O. The protein operates within porphyrin-containing compound metabolism; protoheme biosynthesis. Involved in coproporphyrin-dependent heme b biosynthesis. Catalyzes the decarboxylation of Fe-coproporphyrin III (coproheme) to heme b (protoheme IX), the last step of the pathway. The reaction occurs in a stepwise manner with a three-propionate intermediate. In Thermus thermophilus (strain ATCC BAA-163 / DSM 7039 / HB27), this protein is Coproheme decarboxylase.